The chain runs to 154 residues: uncharacterized protein (154 aa).

Transmembrane regions (helical) follow at residues 5 to 24, 29 to 48, 53 to 75, 87 to 109, and 124 to 146; these read TLII…GVLL, FYAA…IYAA, PVVV…AIAA, IFWV…SMAV, and ATDY…LSAI.

It is found in the cell membrane. This is an uncharacterized protein from Archaeoglobus fulgidus (strain ATCC 49558 / DSM 4304 / JCM 9628 / NBRC 100126 / VC-16).